Here is a 175-residue protein sequence, read N- to C-terminus: Protein TWIN SISTER of FT (175 aa).

Belongs to the phosphatidylethanolamine-binding protein family.

It is found in the cytoplasm. In terms of biological role, may form complexes with phosphorylated ligands by interfering with kinases and their effectors. The chain is Protein TWIN SISTER of FT (TSF) from Arabidopsis thaliana (Mouse-ear cress).